The sequence spans 277 residues: Zaragozic acid A biosynthesis cluster protein 1 (277 aa).

It functions in the pathway secondary metabolite biosynthesis. Its function is as follows. Part of the gene cluster that mediates the biosynthesis of squalestatin S1 (SQS1, also known as zaragozic acid A), a heavily oxidized fungal polyketide that offers potent cholesterol lowering activity by targeting squalene synthase (SS). SQS1 is composed of a 2,8-dioxobicyclic[3.2.1]octane-3,4,5-tricarboxyclic acid core that is connected to two lipophilic polyketide arms. These initial steps feature the priming of an unusual benzoic acid starter unit onto the highly reducing polyketide synthase clz14, followed by oxaloacetate extension and product release to generate a tricarboxylic acid containing product. The phenylalanine ammonia lyase (PAL) clz10 and the acyl-CoA ligase clz12 are involved in transforming phenylalanine into benzoyl-CoA. The citrate synthase-like protein clz17 is involved in connecting the C-alpha-carbons of the hexaketide chain and oxaloacetate to afford the tricarboxylic acid unit. The potential hydrolytic enzymes, clz11 and clz13, are in close proximity to pks2 and may participate in product release. On the other side, the tetraketide arm is synthesized by a the squalestatin tetraketide synthase clz2 and enzymatically esterified to the core in the last biosynthetic step, by the acetyltransferase clz6. The biosynthesis of the tetraketide must involve 3 rounds of chain extension. After the first and second rounds methyl-transfer occurs, and in all rounds of extension the ketoreductase and dehydratase are active. The enoyl reductase and C-MeT of clz2 are not active in the final round of extension. The acetyltransferase clz6 appears to have a broad substrate selectivity for its acyl CoA substrate, allowing the in vitro synthesis of novel squalestatins. The biosynthesis of SQS1 requires several oxidative steps likely performed by oxidoreductases clz3, clz15 and clz16. Finally, in support of the identification of the cluster as being responsible for SQS1 production, the cluster contains a gene encoding a putative squalene synthase (SS) clz20, suggesting a likely mechanism for self-resistance. The protein is Zaragozic acid A biosynthesis cluster protein 1 of Cochliobolus lunatus (Filamentous fungus).